Here is a 486-residue protein sequence, read N- to C-terminus: Alpha-L-arabinofuranosidase B (486 aa).

The first 25 residues, 1–25, serve as a signal peptide directing secretion; the sequence is MLSLKAVLRFASVAVAVVLPTLAQA. Asparagine 42 carries an N-linked (GlcNAc...) asparagine glycan. A catalytic region spans residues 45-342; it reads LVKQRADPQI…KLYWRSDGTP (298 aa). The Proton acceptor role is filled by aspartate 51. Glutamate 229 (proton donor) is an active-site residue. Residues asparagine 302, asparagine 416, and asparagine 426 are each glycosylated (N-linked (GlcNAc...) asparagine). Residues 359-467 are ABD; it reads SSADQTLYVG…AGSYLVSGGN (109 aa).

This sequence belongs to the glycosyl hydrolase 43 family.

The protein localises to the secreted. The enzyme catalyses Hydrolysis of terminal non-reducing alpha-L-arabinofuranoside residues in alpha-L-arabinosides.. It participates in glycan metabolism; L-arabinan degradation. Its function is as follows. Secreted arabinofuranosidase that causes degradation of rice cell wall components during infection. Required for virulence. This Pyricularia oryzae (strain 70-15 / ATCC MYA-4617 / FGSC 8958) (Rice blast fungus) protein is Alpha-L-arabinofuranosidase B.